The chain runs to 70 residues: U-scoloptoxin(04)-Er3a (70 aa).

The N-terminal stretch at 1 to 24 (MAAIRNLLILTMLLIVCVSWNADA) is a signal peptide.

This sequence belongs to the scoloptoxin-04 family. Contains 2 disulfide bonds. Expressed by the venom gland.

The protein resides in the secreted. In Ethmostigmus rubripes (Giant centipede), this protein is U-scoloptoxin(04)-Er3a.